Here is a 426-residue protein sequence, read N- to C-terminus: Spermidine/putrescine import ATP-binding protein PotA (426 aa).

The 233-residue stretch at 6 to 238 (IEFKNVSKTY…PINHFVADFI (233 aa)) folds into the ABC transporter domain. 40–47 (GASGSGKS) serves as a coordination point for ATP.

This sequence belongs to the ABC transporter superfamily. Spermidine/putrescine importer (TC 3.A.1.11.1) family. As to quaternary structure, the complex is composed of two ATP-binding proteins (PotA), two transmembrane proteins (PotB and PotC) and a solute-binding protein (PotD).

It localises to the cell membrane. The enzyme catalyses ATP + H2O + polyamine-[polyamine-binding protein]Side 1 = ADP + phosphate + polyamineSide 2 + [polyamine-binding protein]Side 1.. In terms of biological role, part of the ABC transporter complex PotABCD involved in spermidine/putrescine import. Responsible for energy coupling to the transport system. This is Spermidine/putrescine import ATP-binding protein PotA from Lactococcus lactis subsp. cremoris (strain SK11).